We begin with the raw amino-acid sequence, 153 residues long: UPF0158 protein PA5073 (153 aa).

The protein belongs to the UPF0158 family.

The sequence is that of UPF0158 protein PA5073 from Pseudomonas aeruginosa (strain ATCC 15692 / DSM 22644 / CIP 104116 / JCM 14847 / LMG 12228 / 1C / PRS 101 / PAO1).